Here is a 124-residue protein sequence, read N- to C-terminus: Small ribosomal subunit protein uS12c (124 aa).

It belongs to the universal ribosomal protein uS12 family. Part of the 30S ribosomal subunit.

Its subcellular location is the plastid. It is found in the chloroplast. In terms of biological role, with S4 and S5 plays an important role in translational accuracy. Located at the interface of the 30S and 50S subunits. This is Small ribosomal subunit protein uS12c (rps12) from Oryza nivara (Indian wild rice).